The chain runs to 215 residues: Cytochrome b6 (215 aa).

Residues 32–52 form a helical membrane-spanning segment; it reads IFYCLGGITLTCFLVQVATGF. C35 provides a ligand contact to heme c. Residues H86 and H100 each coordinate heme b. 3 helical membrane passes run 90–110, 116–136, and 186–206; these read ASMM…TGGF, LTWV…VTGY, and LHTF…FPMI. The heme b site is built by H187 and H202.

This sequence belongs to the cytochrome b family. PetB subfamily. As to quaternary structure, the 4 large subunits of the cytochrome b6-f complex are cytochrome b6, subunit IV (17 kDa polypeptide, PetD), cytochrome f and the Rieske protein, while the 4 small subunits are PetG, PetL, PetM and PetN. The complex functions as a dimer. The cofactor is heme b. Heme c is required as a cofactor.

It localises to the plastid. The protein localises to the chloroplast thylakoid membrane. Functionally, component of the cytochrome b6-f complex, which mediates electron transfer between photosystem II (PSII) and photosystem I (PSI), cyclic electron flow around PSI, and state transitions. This chain is Cytochrome b6, found in Nicotiana tomentosiformis (Tobacco).